A 249-amino-acid chain; its full sequence is Protein-lysine 6-oxidase (249 aa).

Sulfotyrosine is present on Tyr19. Residues 45-249 (PDLVPDPYYI…YASGCTISPY (205 aa)) are lysyl-oxidase like. 5 cysteine pairs are disulfide-bonded: Cys70-Cys76, Cys123-Cys172, Cys156-Cys162, Cys183-Cys193, and Cys230-Cys244. Cu cation is bound by residues His124, His126, and His128. A cross-link (lysine tyrosylquinone (Lys-Tyr)) is located at residues 152-187 (KASFCLEDTSCDYGYHRRFACTAHTQGLSPGCYDTY). 2',4',5'-topaquinone is present on Tyr187.

The protein belongs to the lysyl oxidase family. Interacts with MFAP4. Interacts (via propeptide) with EFEMP2; this interaction is strong and facilitates formation of ternary complexes with ELN during elastic fiber assembly; this interaction limits interaction of EFEMP2 with FBLN5. The cofactor is Cu cation. Lysine tyrosylquinone residue is required as a cofactor. The lysine tyrosylquinone cross-link (LTQ) is generated by condensation of the epsilon-amino group of a lysine with a topaquinone produced by oxidation of tyrosine. In terms of processing, proteolytically cleaved by BMP1 which removes the propeptide. Also proteolytically cleaved by ADAMTS2 and ADAMTS14, but not by ADAMTS3, at an additional cleavage site downstream of the BMP1 cleavage site. The propeptide plays a role in directing the deposition of this enzyme to elastic fibers, via interaction with tropoelastin. Cleavage by BMP1 to remove the propeptide does not increase enzymatic activity but increases binding to collagen. Cleavage by ADAMTS2 produces a form with reduced collagen-binding activity. Post-translationally, sulfated at Tyr-19 and also at either Tyr-15 or Tyr-16 which enhances binding to collagen.

Its subcellular location is the secreted. The protein localises to the extracellular space. The enzyme catalyses L-lysyl-[protein] + O2 + H2O = (S)-2-amino-6-oxohexanoyl-[protein] + H2O2 + NH4(+). In terms of biological role, responsible for the post-translational oxidative deamination of peptidyl lysine residues in precursors to fibrous collagen and elastin. Regulator of Ras expression. May play a role in tumor suppression. Plays a role in the aortic wall architecture. This Sus scrofa (Pig) protein is Protein-lysine 6-oxidase.